The primary structure comprises 363 residues: Small ribosomal subunit biogenesis GTPase RsgA (363 aa).

The CP-type G domain occupies 112–268; sequence HQQVIAANID…LIDTPGMREL (157 aa). Residues 157–160 and 210–218 each bind GTP; these read TKAD and GSSGAGKST. Zn(2+) is bound by residues cysteine 291, cysteine 296, histidine 298, and cysteine 304. The tract at residues 340–363 is disordered; that stretch reads RVAQNNRGKGSGKRPASVDRPGRR.

The protein belongs to the TRAFAC class YlqF/YawG GTPase family. RsgA subfamily. Monomer. Associates with 30S ribosomal subunit, binds 16S rRNA. The cofactor is Zn(2+).

It localises to the cytoplasm. Its function is as follows. One of several proteins that assist in the late maturation steps of the functional core of the 30S ribosomal subunit. Helps release RbfA from mature subunits. May play a role in the assembly of ribosomal proteins into the subunit. Circularly permuted GTPase that catalyzes slow GTP hydrolysis, GTPase activity is stimulated by the 30S ribosomal subunit. This Xanthomonas campestris pv. campestris (strain 8004) protein is Small ribosomal subunit biogenesis GTPase RsgA.